The following is a 603-amino-acid chain: O-acetyltransferase OatA (603 aa).

A run of 11 helical transmembrane segments spans residues 17–37 (YLPGLDGLRAFAVIGIIIYHL), 45–65 (GFLGVDTFFVISGYLITSLLI), 87–107 (LIPAVLFLICVVLTFTLIFKP), 148–168 (LWSLAIEEQFYLLFPLVITFL), 177–197 (IIQTLFIVSLISLGLMIVIHF), 211–231 (TRLQTLLLGCILAFIWPPFAL), 239–259 (IVVSLDIIGISGFAVLMTLFF), 268–288 (IYNGGFYIISFATLFIIAIAV), 311–331 (YSLYLWHYPIIVFVNSYYVQG), 333–353 (IPVYVYIIEILLTALMAEISY), and 382–402 (VLVILLLVPSIVVLSGQFDAL). Residues S453, D575, and H578 contribute to the active site.

This sequence belongs to the acyltransferase 3 family. In terms of assembly, monomer.

Its subcellular location is the cell membrane. Functionally, responsible for O-acetylation at the C(6)-hydroxyl group of N-acetylmuramyl residues, forming the corresponding N,6-O-diacetylmuramic acid of the peptidoglycan. O-acetylation of the peptidoglycan is the major determinant for lysozyme resistance. The protein is O-acetyltransferase OatA of Staphylococcus aureus (strain NCTC 8325 / PS 47).